A 381-amino-acid polypeptide reads, in one-letter code: Dual-specificity RNA methyltransferase RlmN (381 aa).

E95 (proton acceptor) is an active-site residue. The 239-residue stretch at 101 to 339 folds into the Radical SAM core domain; sequence DGRRGTLCVS…MTTVRTTRGD (239 aa). C108 and C345 are oxidised to a cystine. [4Fe-4S] cluster contacts are provided by C115, C119, and C122. S-adenosyl-L-methionine is bound by residues 169–170, S201, 223–225, and N302; these read GE and SLH. Residue C345 is the S-methylcysteine intermediate of the active site.

It belongs to the radical SAM superfamily. RlmN family. [4Fe-4S] cluster is required as a cofactor.

Its subcellular location is the cytoplasm. It catalyses the reaction adenosine(2503) in 23S rRNA + 2 reduced [2Fe-2S]-[ferredoxin] + 2 S-adenosyl-L-methionine = 2-methyladenosine(2503) in 23S rRNA + 5'-deoxyadenosine + L-methionine + 2 oxidized [2Fe-2S]-[ferredoxin] + S-adenosyl-L-homocysteine. The enzyme catalyses adenosine(37) in tRNA + 2 reduced [2Fe-2S]-[ferredoxin] + 2 S-adenosyl-L-methionine = 2-methyladenosine(37) in tRNA + 5'-deoxyadenosine + L-methionine + 2 oxidized [2Fe-2S]-[ferredoxin] + S-adenosyl-L-homocysteine. Functionally, specifically methylates position 2 of adenine 2503 in 23S rRNA and position 2 of adenine 37 in tRNAs. m2A2503 modification seems to play a crucial role in the proofreading step occurring at the peptidyl transferase center and thus would serve to optimize ribosomal fidelity. The sequence is that of Dual-specificity RNA methyltransferase RlmN from Alcanivorax borkumensis (strain ATCC 700651 / DSM 11573 / NCIMB 13689 / SK2).